Reading from the N-terminus, the 251-residue chain is CDP-diacylglycerol pyrophosphatase (251 aa).

Residues 5–25 (GYFLLAVIVIVAAAGVGYWKF) traverse the membrane as a helical segment.

Belongs to the Cdh family.

It is found in the cell inner membrane. The enzyme catalyses a CDP-1,2-diacyl-sn-glycerol + H2O = a 1,2-diacyl-sn-glycero-3-phosphate + CMP + 2 H(+). The protein operates within phospholipid metabolism; CDP-diacylglycerol degradation; phosphatidate from CDP-diacylglycerol: step 1/1. This Salmonella enteritidis PT4 (strain P125109) protein is CDP-diacylglycerol pyrophosphatase.